The chain runs to 463 residues: MRVLFCSSEIYPYAKTGGLADFSFCLIKYLKKYGVKVKGVMPYYKTLKAENLRKTDKGVTLNLNGKDYTFEVYESEDCYFLRNDELFGRDYIYGPPGWGYEDNDIRFGGFSRAVSELISTGQLEADVVHANDWQTALIPLFLKEVFKTPVKTVFTIHNLAYQGLFPKETVERVGIPPYLFHMEAVEFWGLVNFMKGGIVFSDLITTVSPTYAKEIQTQEYGYGLEGVLKKYSYKLRGILNGIDYEVWNPEKDKYIYQNYSLRNYSKKFKNKEFLSKELGIEAEKPLISFINRFTHQKGVELILNCAEEMSKLNANFVFLGTGEYENAFLDVSKIYKNFKVFAEFNEGFARKLYASSDFILMPSYFEPCGLTQMIGMRYGCVPIVRKTGGLRDTVKDISEGGYGITFEEPSKETFLCSLKRAIELYENAKKFRNSVKIVMSLDFSCDRMTKEYIECYEEVQSHQ.

Lysine 15 is an ADP-alpha-D-glucose binding site.

It belongs to the glycosyltransferase 1 family. Bacterial/plant glycogen synthase subfamily.

It catalyses the reaction [(1-&gt;4)-alpha-D-glucosyl](n) + ADP-alpha-D-glucose = [(1-&gt;4)-alpha-D-glucosyl](n+1) + ADP + H(+). The protein operates within glycan biosynthesis; glycogen biosynthesis. Its function is as follows. Synthesizes alpha-1,4-glucan chains using ADP-glucose. This Aquifex aeolicus (strain VF5) protein is Glycogen synthase.